The primary structure comprises 310 residues: Acetyl-coenzyme A carboxylase carboxyl transferase subunit beta (310 aa).

The CoA carboxyltransferase N-terminal domain occupies 27-296 (LWKKCPKCSA…PEFENEEELE (270 aa)). Residues Cys31, Cys34, Cys50, and Cys53 each contribute to the Zn(2+) site. The C4-type zinc finger occupies 31-53 (CPKCSAVLYRPELEKNLDVCPKC). Residues 285–310 (PEPEFENEEELEEEEMERPEPPDNVE) form a disordered region. A compositionally biased stretch (acidic residues) spans 287–310 (PEFENEEELEEEEMERPEPPDNVE).

This sequence belongs to the AccD/PCCB family. As to quaternary structure, acetyl-CoA carboxylase is a heterohexamer composed of biotin carboxyl carrier protein (AccB), biotin carboxylase (AccC) and two subunits each of ACCase subunit alpha (AccA) and ACCase subunit beta (AccD). Requires Zn(2+) as cofactor.

The protein localises to the cytoplasm. It catalyses the reaction N(6)-carboxybiotinyl-L-lysyl-[protein] + acetyl-CoA = N(6)-biotinyl-L-lysyl-[protein] + malonyl-CoA. Its pathway is lipid metabolism; malonyl-CoA biosynthesis; malonyl-CoA from acetyl-CoA: step 1/1. Component of the acetyl coenzyme A carboxylase (ACC) complex. Biotin carboxylase (BC) catalyzes the carboxylation of biotin on its carrier protein (BCCP) and then the CO(2) group is transferred by the transcarboxylase to acetyl-CoA to form malonyl-CoA. The protein is Acetyl-coenzyme A carboxylase carboxyl transferase subunit beta of Hahella chejuensis (strain KCTC 2396).